Here is a 535-residue protein sequence, read N- to C-terminus: Ribonuclease Y 2 (535 aa).

The chain crosses the membrane as a helical span at residues 1-21; it reads MLITGLIIGCLLIGLVIGYVV. The region spanning 207 to 268 is the KH domain; it reads LEHTVTVPNG…IRREVARVAL (62 aa). The HD domain occupies 334–427; sequence VLLHSIEVAQ…VAAADAISGA (94 aa).

Belongs to the RNase Y family.

It localises to the cell membrane. Endoribonuclease that initiates mRNA decay. This is Ribonuclease Y 2 from Levilactobacillus brevis (strain ATCC 367 / BCRC 12310 / CIP 105137 / JCM 1170 / LMG 11437 / NCIMB 947 / NCTC 947) (Lactobacillus brevis).